Consider the following 426-residue polypeptide: MNKIAYLQCPTGISGDMCLGTLVSLGVPVAYLTEKLNNLGIAEEYKLRAEKVQRNGQEATKVHVDLLDHHHHDHEHHHHGRHLPEIEQMILQAGLPPRAEAWSLAVFRQLAVAEGSVHGIAPEKVHFHEVGAVDAIVDIVGTCLGLDWLGIASDNAGFPLLYCSAFPTGGGTVRAAHGQMAVPVPAVLKLWEMRGCPVYSNGIDRELVTPTGAAIATTLVKEFGAPPPMTIKQVGLGAGTINLPIPNILRLWLGESANLQANITDSAANSPTLETISVLETQIDDLNPQAIGYVFEQLFAVGALDVFTQPIGMKKSRPGILLTVICHPETLNDCEAVLFCETTTLGIRRTTQQRAVLQREFKPIQTKYGTVRIKIAWHGQSPEKVITNVQPEYEDCAELARKHKIPWREIQQLALQGWYESIQNSK.

It belongs to the LarC family.

The chain is Putative nickel insertion protein from Nostoc sp. (strain PCC 7120 / SAG 25.82 / UTEX 2576).